The sequence spans 342 residues: MAGRLQVEVRLQDGVIRAVDTRLQRPLAQLSRLLVGQTAEAALARLPLLFSLCAAAQQVAALRALERAAGWTAEPEVERGRSQLTELELIRESLLRLVQVWELPLPLERLKVLVALCRRGAARLQPLTSFRAPSLPADPHLQETLAELAAAWADLELPITADWLGPRLGRWQEVVLGGPPPAVFDPADLSALLAQLRSGDTRASIAGQPRITGPLCAAEAQLSAAAQIEQHVGALLRHTAQAIDSLQQPSPPPAVAGLLAGEGVGLAQTARGALLHRVCLDEGTVGAWQLLAPTDWNFHEDGPLRRRLCGVRVAEEDAGALLRELILAVDPCVAFEVKIIHA.

The protein belongs to the HupK family.

The polypeptide is Hydrogenase expression/formation protein HupV (hupV) (Azotobacter chroococcum mcd 1).